A 94-amino-acid chain; its full sequence is Integration host factor subunit beta (94 aa).

It belongs to the bacterial histone-like protein family. As to quaternary structure, heterodimer of an alpha and a beta chain.

Functionally, this protein is one of the two subunits of integration host factor, a specific DNA-binding protein that functions in genetic recombination as well as in transcriptional and translational control. The polypeptide is Integration host factor subunit beta (Vibrio campbellii (strain ATCC BAA-1116)).